The following is a 275-amino-acid chain: Small ribosomal subunit protein uS2 (275 aa).

The tract at residues 244-275 (REGAEASKKKATVKKKAAPRAASGESAEAAAE) is disordered. Basic residues predominate over residues 252-261 (KKATVKKKAA). The span at 262–275 (PRAASGESAEAAAE) shows a compositional bias: low complexity.

It belongs to the universal ribosomal protein uS2 family.

The chain is Small ribosomal subunit protein uS2 from Thioalkalivibrio sulfidiphilus (strain HL-EbGR7).